The primary structure comprises 960 residues: Semaphorin-6C (960 aa).

The first 23 residues, 1-23 (MPRAPHSMPLLLLLLLSLPQAQT), serve as a signal peptide directing secretion. Over 24-635 (AFPQDPIPLL…ASASRSIPIP (612 aa)) the chain is Extracellular. A Sema domain is found at 29 to 515 (PIPLLTSDLQ…FPGCIVYLSL (487 aa)). An N-linked (GlcNAc...) asparagine glycan is attached at Asn69. Disulfide bonds link Cys110/Cys120, Cys138/Cys147, Cys261/Cys372, and Cys286/Cys331. N-linked (GlcNAc...) asparagine glycosylation occurs at Asn285. An N-linked (GlcNAc...) asparagine glycan is attached at Asn436. 4 disulfides stabilise this stretch: Cys478-Cys509, Cys518-Cys536, Cys524-Cys569, and Cys528-Cys544. Residues 555-624 (VDLTGNQESM…HTQGVRRDLS (70 aa)) are disordered. The chain crosses the membrane as a helical span at residues 636-656 (LLLACVAAAFALGASVSGLLV). Residues 657 to 960 (SCACRRANRR…PAPHGSHFNF (304 aa)) are Cytoplasmic-facing. Disordered regions lie at residues 685 to 725 (LARL…SPPE), 745 to 792 (ASGG…PGQE), and 806 to 960 (HGPQ…HFNF). Low complexity predominate over residues 899-909 (RVPSGGPSRYS). A compositionally biased stretch (basic and acidic residues) spans 922 to 935 (PDGHRGRSLKRVDV). Pro residues predominate over residues 940 to 952 (SPKPPLATPPQPA).

It belongs to the semaphorin family. In terms of tissue distribution, expressed in many regions of the developing nervous system, probably in neurons and their precursors, but also in nonneural tissue such as immature muscle and dermis. In adult, strong expression in the skeletal muscle and moderate expression in the brain, where cerebellum shows the highest expression. Also expressed in almost all areas of the CNS.

Its subcellular location is the cell membrane. Shows growth cone collapsing activity on dorsal root ganglion (DRG) neurons in vitro. May be a stop signal for the DRG neurons in their target areas, and possibly also for other neurons. May also be involved in the maintenance and remodeling of neuronal connections. The chain is Semaphorin-6C (Sema6c) from Rattus norvegicus (Rat).